A 362-amino-acid polypeptide reads, in one-letter code: Transcription factor bHLH128 (362 aa).

A compositionally biased stretch (low complexity) spans 1 to 16 (MYQSSSSTSSSSQRSS). 4 disordered regions span residues 1–23 (MYQS…GGGL), 78–106 (SDST…SNKD), 120–140 (SQQH…YSLA), and 162–184 (LNQP…HSRL). Residues 78-96 (SDSTTCGVNNSSDGQKQLG) show a composition bias toward polar residues. Polar residues predominate over residues 162 to 173 (LNQPTSDYSPQG). At S189 the chain carries Phosphoserine. The 51-residue stretch at 289–339 (CATHPRSIAERERRTRISGKLKKLQDLVPNMDKQTSYSDMLDLAVQHIKGL) folds into the bHLH domain.

As to quaternary structure, homodimer.

The protein resides in the nucleus. This Arabidopsis thaliana (Mouse-ear cress) protein is Transcription factor bHLH128 (BHLH128).